The chain runs to 435 residues: Protein phosphatase 2C homolog 2 (435 aa).

A PPM-type phosphatase domain is found at 23-298; that stretch reads IYGVSAMQGW…DNMTMIIIGL (276 aa). 4 residues coordinate Mn(2+): Asp71, Gly72, Asp240, and Asp289. The disordered stretch occupies residues 366–435; sequence DQTEEDRDLP…TSGAPEKSTS (70 aa). Positions 381-392 are enriched in basic and acidic residues; sequence ELPDSARNEREG. Residues 409–418 are compositionally biased toward low complexity; that stretch reads GSSASTSEST. A compositionally biased stretch (polar residues) spans 419-435; it reads VTPAGSSTSGAPEKSTS.

The protein belongs to the PP2C family. The cofactor is Mg(2+). Mn(2+) is required as a cofactor.

Its subcellular location is the cytoplasm. It is found in the nucleus. The enzyme catalyses O-phospho-L-seryl-[protein] + H2O = L-seryl-[protein] + phosphate. It catalyses the reaction O-phospho-L-threonyl-[protein] + H2O = L-threonyl-[protein] + phosphate. Dephosphorylating regulator for many key proteins. Dephosphorylates phosphoglycerate kinase pgk1 at least on 'Ser-203' to negatively regulate targeting of pgk1 to the mitochondrion, thereby negatively regulating production of acetyl-CoA and consequently aflatoxin biosynthesis. This Aspergillus flavus (strain ATCC 200026 / FGSC A1120 / IAM 13836 / NRRL 3357 / JCM 12722 / SRRC 167) protein is Protein phosphatase 2C homolog 2.